The following is a 138-amino-acid chain: Large ribosomal subunit protein uL16 (138 aa).

The span at 1–13 shows a compositional bias: basic residues; sequence MLQPARRKFRKEQ. The segment at 1–22 is disordered; that stretch reads MLQPARRKFRKEQKGRNTGLAT.

Belongs to the universal ribosomal protein uL16 family. In terms of assembly, part of the 50S ribosomal subunit.

Its function is as follows. Binds 23S rRNA and is also seen to make contacts with the A and possibly P site tRNAs. This is Large ribosomal subunit protein uL16 from Thiobacillus denitrificans (strain ATCC 25259 / T1).